The sequence spans 154 residues: Nascent polypeptide-associated complex subunit beta (154 aa).

In terms of domain architecture, NAC-A/B spans 33–98; sequence EQDDTKLIEA…PQEKNVTQLI (66 aa). The segment at 125–154 is disordered; the sequence is APTELNAGAPAGGDEGIPDLIDGEKFDEVE.

Belongs to the NAC-beta family. In terms of assembly, part of the nascent polypeptide-associated complex (NAC), consisting of EGD2 and EGD1. NAC associates with ribosomes via EGD1.

The protein resides in the cytoplasm. It is found in the nucleus. In terms of biological role, component of the nascent polypeptide-associated complex (NAC), a dynamic component of the ribosomal exit tunnel, protecting the emerging polypeptides from interaction with other cytoplasmic proteins to ensure appropriate nascent protein targeting. The NAC complex also promotes mitochondrial protein import by enhancing productive ribosome interactions with the outer mitochondrial membrane and blocks the inappropriate interaction of ribosomes translating non-secretory nascent polypeptides with translocation sites in the membrane of the endoplasmic reticulum. EGD1 may act as a transcription factor that exert a negative effect on the expression of several genes that are transcribed by RNA polymerase II. In Scheffersomyces stipitis (strain ATCC 58785 / CBS 6054 / NBRC 10063 / NRRL Y-11545) (Yeast), this protein is Nascent polypeptide-associated complex subunit beta (EGD1).